Reading from the N-terminus, the 321-residue chain is Malate dehydrogenase (321 aa).

NAD(+) contacts are provided by residues 10 to 15 (GAGQIG) and Asp34. Residues Arg83 and Arg89 each coordinate substrate. Residues Asn96 and 119 to 121 (VTN) each bind NAD(+). Residues Asn121 and Arg152 each coordinate substrate. Catalysis depends on His176, which acts as the Proton acceptor.

It belongs to the LDH/MDH superfamily. MDH type 3 family.

It carries out the reaction (S)-malate + NAD(+) = oxaloacetate + NADH + H(+). In terms of biological role, catalyzes the reversible oxidation of malate to oxaloacetate. In Azorhizobium caulinodans (strain ATCC 43989 / DSM 5975 / JCM 20966 / LMG 6465 / NBRC 14845 / NCIMB 13405 / ORS 571), this protein is Malate dehydrogenase.